A 368-amino-acid polypeptide reads, in one-letter code: Alcohol dehydrogenase 6 (368 aa).

Phosphoserine is present on serine 23. Residues cysteine 47, histidine 69, cysteine 99, cysteine 102, cysteine 105, cysteine 113, and cysteine 175 each contribute to the Zn(2+) site. NAD(+) contacts are provided by residues 200 to 205 (GLGGVG), aspartate 224, lysine 229, and 293 to 295 (VGV).

The protein belongs to the zinc-containing alcohol dehydrogenase family. Class-V subfamily. As to quaternary structure, dimer. Requires Zn(2+) as cofactor. As to expression, stomach and liver.

It localises to the cytoplasm. It catalyses the reaction a primary alcohol + NAD(+) = an aldehyde + NADH + H(+). The enzyme catalyses a secondary alcohol + NAD(+) = a ketone + NADH + H(+). Inhibited partially by pyrazole (10 mM) in the reaction mixture containing 100 mM ethanol at pH 10.0. Functionally, alcohol dehydrogenase. Catalyzes the NAD-dependent oxidation of primary alcohols to the corresponding aldehydes. Oxidizes secondary alcohols to the corresponding ketones. This is Alcohol dehydrogenase 6 (ADH6) from Homo sapiens (Human).